The sequence spans 87 residues: Protein ORF3 (87 aa).

Residues 58–87 form a disordered region; sequence GALNNAPREPSAPPLSQTLSPRQVLARYQM. A PTAP/PSAP motif motif is present at residues 67–70; sequence PSAP.

It belongs to the hepevirus ORF3 protein family. Palmitoylated in the N-terminus.

The protein resides in the host endoplasmic reticulum membrane. It is found in the host cytoplasm. The protein localises to the host cytoskeleton. Its subcellular location is the virion. It localises to the host cell membrane. Its function is as follows. Small multifunctional phosphoprotein involved in virion morphogenesis, egress and counteracting host innate immunity. This Avian hepatitis E virus (isolate Chicken/California/Meng) (AHEV) protein is Protein ORF3.